A 298-amino-acid chain; its full sequence is Acetylglutamate kinase (298 aa).

Substrate-binding positions include Gly69 to Gly70, Arg91, and Asn196.

It belongs to the acetylglutamate kinase family. ArgB subfamily.

The protein resides in the cytoplasm. It catalyses the reaction N-acetyl-L-glutamate + ATP = N-acetyl-L-glutamyl 5-phosphate + ADP. It functions in the pathway amino-acid biosynthesis; L-arginine biosynthesis; N(2)-acetyl-L-ornithine from L-glutamate: step 2/4. Catalyzes the ATP-dependent phosphorylation of N-acetyl-L-glutamate. This Rhodopseudomonas palustris (strain BisB5) protein is Acetylglutamate kinase.